A 219-amino-acid polypeptide reads, in one-letter code: Redox-sensing transcriptional repressor Rex (219 aa).

The segment at residues 17 to 56 (RYLRYVEDLLNHDIMRISSSELSQRMGYTASQVRQDFNNF) is a DNA-binding region (H-T-H motif). 91-96 (GVGNLG) contacts NAD(+).

Belongs to the transcriptional regulatory Rex family. Homodimer.

The protein resides in the cytoplasm. In terms of biological role, modulates transcription in response to changes in cellular NADH/NAD(+) redox state. This is Redox-sensing transcriptional repressor Rex from Caldicellulosiruptor saccharolyticus (strain ATCC 43494 / DSM 8903 / Tp8T 6331).